We begin with the raw amino-acid sequence, 880 residues long: Alanine--tRNA ligase (880 aa).

The interval 414–443 (TVDESEFESEMEKQRNRARKARSGGDTEGW) is disordered. Positions 566, 570, 668, and 672 each coordinate Zn(2+).

Belongs to the class-II aminoacyl-tRNA synthetase family. Requires Zn(2+) as cofactor.

It localises to the cytoplasm. It carries out the reaction tRNA(Ala) + L-alanine + ATP = L-alanyl-tRNA(Ala) + AMP + diphosphate. Catalyzes the attachment of alanine to tRNA(Ala) in a two-step reaction: alanine is first activated by ATP to form Ala-AMP and then transferred to the acceptor end of tRNA(Ala). Also edits incorrectly charged Ser-tRNA(Ala) and Gly-tRNA(Ala) via its editing domain. This chain is Alanine--tRNA ligase, found in Alkaliphilus metalliredigens (strain QYMF).